The sequence spans 174 residues: uncharacterized protein (174 aa).

This is an uncharacterized protein from Caenorhabditis elegans.